The chain runs to 553 residues: MGSRPFTKNPAPMMLTIRVALVLSCICPANSIDGRPFAAAGIVVTGDKAVNIYTSSQTGSIIVKLLPNLPKDKEACAKAPLDAYNRTLTTLLTPLGDSIRRIQESVTTSGGGRQGRLIGAIIGGVALGVATAAQITAAAALIQAKQNAANILRLKESIAATNEAVHEVTDGLSQLAVAVGKMQQFVNDQFNKTAQELDCIKIAQQVGVELNLYLTELTTVFGPQITSPALNKLTIQALYNLAGGNMDYLLTKLGIGNNQLSSLIGSGLITGNPILYDSQTQLLGIQVTLPSVGNLNNMRATYLETLSVSTTRGFASALVPKVVTQVGSVIEELDTSYCIETDLDLYCTRIVTFPMSPGIYSCLSGNTSACMYSKTEGALTTPYMTIKGSVIANCKMTTCRCVNPPGIISQNYGEAVSLIDKQSCNVLSLGGITLRLSGEFDVTYQKNISIQDSQVIITGNLDISTELGNVNNSISNALNKLEESNRKLDKVNVKLTSTSALITYIVLTIISLVFGILSLILACYLMYKQKAQQKTLLWLGNNTLDQMRATTKM.

Positions 1 to 31 (MGSRPFTKNPAPMMLTIRVALVLSCICPANS) are cleaved as a signal peptide. The Extracellular portion of the chain corresponds to 31–500 (SIDGRPFAAA…VNVKLTSTSA (470 aa)). 5 cysteine pairs are disulfide-bonded: cysteine 76–cysteine 199, cysteine 338–cysteine 347, cysteine 362–cysteine 370, cysteine 394–cysteine 399, and cysteine 401–cysteine 424. N-linked (GlcNAc...) asparagine; by host glycosylation is found at asparagine 85 and asparagine 191. A glycan (N-linked (GlcNAc...) asparagine; by host) is linked at asparagine 366. 2 N-linked (GlcNAc...) asparagine; by host glycosylation sites follow: asparagine 447 and asparagine 471. The stretch at 463-499 (ISTELGNVNNSISNALNKLEESNRKLDKVNVKLTSTS) forms a coiled coil. Residues 501–521 (LITYIVLTIISLVFGILSLIL) form a helical membrane-spanning segment. Topologically, residues 522-553 (ACYLMYKQKAQQKTLLWLGNNTLDQMRATTKM) are cytoplasmic. Cysteine 523 is lipidated: S-palmitoyl cysteine; by host.

Belongs to the paramyxoviruses fusion glycoprotein family. In terms of assembly, homotrimer of disulfide-linked F1-F2. The inactive precursor F0 is glycosylated and proteolytically cleaved into F1 and F2 to be functionally active. The cleavage is mediated by cellular proteases during the transport and maturation of the polypeptide.

The protein resides in the virion membrane. It is found in the host cell membrane. In terms of biological role, class I viral fusion protein. Under the current model, the protein has at least 3 conformational states: pre-fusion native state, pre-hairpin intermediate state, and post-fusion hairpin state. During viral and plasma cell membrane fusion, the heptad repeat (HR) regions assume a trimer-of-hairpins structure, positioning the fusion peptide in close proximity to the C-terminal region of the ectodomain. The formation of this structure appears to drive apposition and subsequent fusion of viral and plasma cell membranes. Directs fusion of viral and cellular membranes leading to delivery of the nucleocapsid into the cytoplasm. This fusion is pH independent and occurs directly at the outer cell membrane. The trimer of F1-F2 (F protein) probably interacts with HN at the virion surface. Upon HN binding to its cellular receptor, the hydrophobic fusion peptide is unmasked and interacts with the cellular membrane, inducing the fusion between cell and virion membranes. Later in infection, F proteins expressed at the plasma membrane of infected cells could mediate fusion with adjacent cells to form syncytia, a cytopathic effect that could lead to tissue necrosis. This Gallus gallus (Chicken) protein is Fusion glycoprotein F0 (F).